The sequence spans 372 residues: N-methyl-L-tryptophan oxidase (372 aa).

4-34 (DLIIIGSGSVGAAAGYYATRAGLNVLMTDAH) lines the FAD pocket. Cys-308 carries the S-8alpha-FAD cysteine modification.

It belongs to the MSOX/MTOX family. MTOX subfamily. As to quaternary structure, monomer. It depends on FAD as a cofactor.

The enzyme catalyses N(alpha)-methyl-L-tryptophan + O2 + H2O = L-tryptophan + formaldehyde + H2O2. Catalyzes the oxidative demethylation of N-methyl-L-tryptophan. In Escherichia coli O17:K52:H18 (strain UMN026 / ExPEC), this protein is N-methyl-L-tryptophan oxidase.